The sequence spans 373 residues: Lipoyl synthase (373 aa).

A disordered region spans residues 12–36 (HVVSNDHPSSSPLQPGVKQSGEDKI). [4Fe-4S] cluster is bound by residues C81, C86, C92, C107, C111, C114, and S323. A Radical SAM core domain is found at 93 to 312 (FSHGTATFMI…EEYGMALGFS (220 aa)). Residues 346–373 (PAVSSTEHRERHTIASKSASKTESIRHR) are disordered.

This sequence belongs to the radical SAM superfamily. Lipoyl synthase family. It depends on [4Fe-4S] cluster as a cofactor.

The protein resides in the cytoplasm. It carries out the reaction [[Fe-S] cluster scaffold protein carrying a second [4Fe-4S](2+) cluster] + N(6)-octanoyl-L-lysyl-[protein] + 2 oxidized [2Fe-2S]-[ferredoxin] + 2 S-adenosyl-L-methionine + 4 H(+) = [[Fe-S] cluster scaffold protein] + N(6)-[(R)-dihydrolipoyl]-L-lysyl-[protein] + 4 Fe(3+) + 2 hydrogen sulfide + 2 5'-deoxyadenosine + 2 L-methionine + 2 reduced [2Fe-2S]-[ferredoxin]. Its pathway is protein modification; protein lipoylation via endogenous pathway; protein N(6)-(lipoyl)lysine from octanoyl-[acyl-carrier-protein]: step 2/2. Catalyzes the radical-mediated insertion of two sulfur atoms into the C-6 and C-8 positions of the octanoyl moiety bound to the lipoyl domains of lipoate-dependent enzymes, thereby converting the octanoylated domains into lipoylated derivatives. The protein is Lipoyl synthase of Xylella fastidiosa (strain 9a5c).